A 255-amino-acid polypeptide reads, in one-letter code: 4-hydroxy-tetrahydrodipicolinate reductase (255 aa).

NAD(+)-binding positions include 9–14 (GFKGKM), D35, 89–91 (GTT), and 115–118 (APNF). H145 serves as the catalytic Proton donor/acceptor. H146 serves as a coordination point for (S)-2,3,4,5-tetrahydrodipicolinate. K149 acts as the Proton donor in catalysis. Residue 155 to 156 (GT) coordinates (S)-2,3,4,5-tetrahydrodipicolinate.

This sequence belongs to the DapB family.

The protein resides in the cytoplasm. The catalysed reaction is (S)-2,3,4,5-tetrahydrodipicolinate + NAD(+) + H2O = (2S,4S)-4-hydroxy-2,3,4,5-tetrahydrodipicolinate + NADH + H(+). The enzyme catalyses (S)-2,3,4,5-tetrahydrodipicolinate + NADP(+) + H2O = (2S,4S)-4-hydroxy-2,3,4,5-tetrahydrodipicolinate + NADPH + H(+). It functions in the pathway amino-acid biosynthesis; L-lysine biosynthesis via DAP pathway; (S)-tetrahydrodipicolinate from L-aspartate: step 4/4. In terms of biological role, catalyzes the conversion of 4-hydroxy-tetrahydrodipicolinate (HTPA) to tetrahydrodipicolinate. The protein is 4-hydroxy-tetrahydrodipicolinate reductase of Streptococcus pneumoniae serotype 4 (strain ATCC BAA-334 / TIGR4).